Consider the following 130-residue polypeptide: DNA-directed RNA polymerase subunit omega (130 aa).

2 disordered regions span residues 80-99 and 110-130; these read PEPDTVPLIGSAGASVDADD and EELLKGLEGLAPREEQPEEDE. Basic and acidic residues predominate over residues 110-124; sequence EELLKGLEGLAPREE.

The protein belongs to the RNA polymerase subunit omega family. As to quaternary structure, the RNAP catalytic core consists of 2 alpha, 1 beta, 1 beta' and 1 omega subunit. When a sigma factor is associated with the core the holoenzyme is formed, which can initiate transcription.

The catalysed reaction is RNA(n) + a ribonucleoside 5'-triphosphate = RNA(n+1) + diphosphate. Promotes RNA polymerase assembly. Latches the N- and C-terminal regions of the beta' subunit thereby facilitating its interaction with the beta and alpha subunits. This Nitrobacter hamburgensis (strain DSM 10229 / NCIMB 13809 / X14) protein is DNA-directed RNA polymerase subunit omega.